Consider the following 387-residue polypeptide: SpoIVD-associated factor A (387 aa).

Residues 2-47 form the LysM domain; it reads KIHIVQKGDSLWKIAEKYGVDVEEVKKLNTQLSNPDLIMPGMKIKV. Disordered regions lie at residues 49–106 and 355–387; these read SEGV…MPNL and NPNPNPYSAGVSMPMTNQPSVNQMFGRPEEENE. Over residues 70-96 the composition is skewed to basic and acidic residues; the sequence is KQEHPYAKEKPKSVVDVEDTKPKEKKS. Residues 368–377 are compositionally biased toward polar residues; sequence PMTNQPSVNQ.

It is found in the spore cortex. Functionally, probably involved in the assembly of some coat protein components implicated in both lysozyme resistance and germination. Could be required for the assembly of CotG. Associates with SpoIVD during the early stage of coat assembly. The polypeptide is SpoIVD-associated factor A (safA) (Bacillus subtilis (strain 168)).